Consider the following 81-residue polypeptide: MDHQTLAAHEAVDLHEIVNFKTLCIAKSKLMQGLVFDQELKDLMEKDVQQSIQDLTELQAVYERASFQAPVPQSRPTPIIN.

The protein belongs to the CotF family.

The protein localises to the spore coat. In Bacillus subtilis (strain 168), this protein is Spore coat protein F-like protein YraG (yraG).